The sequence spans 330 residues: Peroxidase 55 (330 aa).

An N-terminal signal peptide occupies residues 1-30 (MDIRSDDAKKPMMMWFLGMLLFSMVAESNA). Disulfide bonds link Cys-41-Cys-121, Cys-74-Cys-79, Cys-127-Cys-326, and Cys-206-Cys-238. His-72 (proton acceptor) is an active-site residue. Residues Asp-73, Val-76, Gly-78, Asp-80, and Ser-82 each coordinate Ca(2+). Substrate is bound at residue Pro-169. Heme b is bound at residue His-199. A Ca(2+)-binding site is contributed by Thr-200. Residue Asn-215 is glycosylated (N-linked (GlcNAc...) asparagine). Ca(2+) contacts are provided by Asp-250, Ser-253, and Asp-258.

The protein belongs to the peroxidase family. Classical plant (class III) peroxidase subfamily. The cofactor is heme b. Ca(2+) serves as cofactor. Slightly expressed in roots.

The protein resides in the secreted. It catalyses the reaction 2 a phenolic donor + H2O2 = 2 a phenolic radical donor + 2 H2O. In terms of biological role, removal of H(2)O(2), oxidation of toxic reductants, biosynthesis and degradation of lignin, suberization, auxin catabolism, response to environmental stresses such as wounding, pathogen attack and oxidative stress. These functions might be dependent on each isozyme/isoform in each plant tissue. The chain is Peroxidase 55 (PER55) from Arabidopsis thaliana (Mouse-ear cress).